A 479-amino-acid polypeptide reads, in one-letter code: Aspartyl/glutamyl-tRNA(Asn/Gln) amidotransferase subunit B (479 aa).

This sequence belongs to the GatB/GatE family. GatB subfamily. Heterotrimer of A, B and C subunits.

The enzyme catalyses L-glutamyl-tRNA(Gln) + L-glutamine + ATP + H2O = L-glutaminyl-tRNA(Gln) + L-glutamate + ADP + phosphate + H(+). The catalysed reaction is L-aspartyl-tRNA(Asn) + L-glutamine + ATP + H2O = L-asparaginyl-tRNA(Asn) + L-glutamate + ADP + phosphate + 2 H(+). Its function is as follows. Allows the formation of correctly charged Asn-tRNA(Asn) or Gln-tRNA(Gln) through the transamidation of misacylated Asp-tRNA(Asn) or Glu-tRNA(Gln) in organisms which lack either or both of asparaginyl-tRNA or glutaminyl-tRNA synthetases. The reaction takes place in the presence of glutamine and ATP through an activated phospho-Asp-tRNA(Asn) or phospho-Glu-tRNA(Gln). The polypeptide is Aspartyl/glutamyl-tRNA(Asn/Gln) amidotransferase subunit B (Streptococcus pyogenes serotype M6 (strain ATCC BAA-946 / MGAS10394)).